The following is a 190-amino-acid chain: MTKLPYALLEKGSLLIASPDVNGGVFSRSVILVCEHSPNGSFGLILNKTLEMDSPEEVFPLDHFDESRVRFCMGGPLQANQIMLLHSSSSEDANSSIEICPSVFLGGDFSFIQEGEIKSNDEKMLFCFGYSGWQAGQLEKEFLEGLWFLAPASQEIVFTARPDKLWSDVLQNLGGRFASMSTVPENLLLN.

Belongs to the UPF0301 (AlgH) family.

The polypeptide is UPF0301 protein TC_0483 (Chlamydia muridarum (strain MoPn / Nigg)).